The chain runs to 1755 residues: Transposon Ty1-OL Gag-Pol polyprotein (1755 aa).

Composition is skewed to polar residues over residues 1–23 (MESQ…SVTS), 48–60 (TKAN…TPAS), and 127–152 (QSQF…GNTF). 3 disordered regions span residues 1–93 (MESQ…MMTQ), 126–173 (PQSQ…RPPP), and 352–421 (GSRN…SKST). The segment covering 153 to 165 (TDSSSADSDMTST) has biased composition (low complexity). The segment at 299 to 401 (NNGIHINNKV…NSKSKTARAH (103 aa)) is RNA-binding. A compositionally biased stretch (low complexity) spans 402–418 (NVSTSNNSPSTDNDSIS). The residue at position 416 (Ser-416) is a Phosphoserine. Asp-461 acts as the For protease activity; shared with dimeric partner in catalysis. Residues 583 to 640 (NVHTSESTRKYPYPFIHRMLAHANAQTIRYSLKNNTITYFNESDVDWSSAIDYQCPDC) are integrase-type zinc finger-like. One can recognise an Integrase catalytic domain in the interval 660 to 835 (NSYEPFQYLH…AGLDISTLLP (176 aa)). 2 residues coordinate Mg(2+): Asp-671 and Asp-736. Disordered regions lie at residues 956 to 1087 (SKAV…ETEK), 1092 to 1111 (RSPS…NIVP), and 1130 to 1171 (DLPL…DSNA). Over residues 960-969 (SPTDSTPPST) the composition is skewed to low complexity. A compositionally biased stretch (polar residues) spans 1005-1015 (STPQISNIEST). Positions 1038-1053 (ESSHASKSKDFRHSDS) are enriched in basic and acidic residues. Composition is skewed to polar residues over residues 1054–1082 (YSEN…QISD) and 1101–1111 (PENNSSHNIVP). The Bipartite nuclear localization signal signature appears at 1178–1212 (KKRSLEDNETEIKVSRDTWNTKNMRSLEPPRSKKR). A Reverse transcriptase Ty1/copia-type domain is found at 1338–1476 (NNYYITQLDI…DILGLEIKYQ (139 aa)). Mg(2+) contacts are provided by Asp-1346, Asp-1427, Asp-1428, Asp-1610, Glu-1652, and Asp-1685. One can recognise an RNase H Ty1/copia-type domain in the interval 1610 to 1752 (DASYGNQPYY…IKTFKLLTNK (143 aa)).

The capsid protein forms a homotrimer, from which the VLPs are assembled. The protease is a homodimer, whose active site consists of two apposed aspartic acid residues. Initially, virus-like particles (VLPs) are composed of the structural unprocessed proteins Gag and Gag-Pol, and also contain the host initiator methionine tRNA (tRNA(i)-Met) which serves as a primer for minus-strand DNA synthesis, and a dimer of genomic Ty RNA. Processing of the polyproteins occurs within the particle and proceeds by an ordered pathway, called maturation. First, the protease (PR) is released by autocatalytic cleavage of the Gag-Pol polyprotein yielding capsid protein p45 and a Pol-p154 precursor protein. This cleavage is a prerequisite for subsequent processing of Pol-p154 at the remaining sites to release the mature structural and catalytic proteins. Maturation takes place prior to the RT reaction and is required to produce transposition-competent VLPs.

Its subcellular location is the cytoplasm. The protein localises to the nucleus. It catalyses the reaction DNA(n) + a 2'-deoxyribonucleoside 5'-triphosphate = DNA(n+1) + diphosphate. The catalysed reaction is Endonucleolytic cleavage to 5'-phosphomonoester.. Functionally, capsid protein (CA) is the structural component of the virus-like particle (VLP), forming the shell that encapsulates the retrotransposons dimeric RNA genome. The particles are assembled from trimer-clustered units and there are holes in the capsid shells that allow for the diffusion of macromolecules. CA also has nucleocapsid-like chaperone activity, promoting primer tRNA(i)-Met annealing to the multipartite primer-binding site (PBS), dimerization of Ty1 RNA and initiation of reverse transcription. Its function is as follows. The aspartyl protease (PR) mediates the proteolytic cleavages of the Gag and Gag-Pol polyproteins after assembly of the VLP. Reverse transcriptase/ribonuclease H (RT) is a multifunctional enzyme that catalyzes the conversion of the retro-elements RNA genome into dsDNA within the VLP. The enzyme displays a DNA polymerase activity that can copy either DNA or RNA templates, and a ribonuclease H (RNase H) activity that cleaves the RNA strand of RNA-DNA heteroduplexes during plus-strand synthesis and hydrolyzes RNA primers. The conversion leads to a linear dsDNA copy of the retrotransposon that includes long terminal repeats (LTRs) at both ends. In terms of biological role, integrase (IN) targets the VLP to the nucleus, where a subparticle preintegration complex (PIC) containing at least integrase and the newly synthesized dsDNA copy of the retrotransposon must transit the nuclear membrane. Once in the nucleus, integrase performs the integration of the dsDNA into the host genome. In Saccharomyces cerevisiae (strain ATCC 204508 / S288c) (Baker's yeast), this protein is Transposon Ty1-OL Gag-Pol polyprotein (TY1B-OL).